We begin with the raw amino-acid sequence, 390 residues long: MRYITAGESHGPQLTTIIEGVPAGLPLVADDINEELARRQKGYGRGRRMQIETDQVQIVSGVRHGETLGSPIALVVENRDFAHWTKIMGAEPLTEQEEKEMKRKVTKPRPGHADLNGAIKYGHRDMRNVLERSSARETTVRVAAGAVAKKVLAELGIAVAGHVIEIGGVQAKETTYRSIEELKSITEASPVRCLDEEAGNQMIKAIDDAKSNGDSIGGIVEVIVEGMPIGVGSYVHYDRKLDAKLAAAMMSINAFKGVEIGIGFEAAHRPGSEVHDEIVWNEEHGYTRRTNNAGGLEGGMTTGMPIVVRGVMKPIPTLYKPLQSVDIDTKEPFTASIERSDSCAVPAASVVAEAVVAWELATAVIEQFGLDRMDLIRENIERHNEYARGF.

The NADP(+) site is built by arginine 39 and arginine 45. The tract at residues 95–117 (EQEEKEMKRKVTKPRPGHADLNG) is disordered. FMN is bound by residues 132 to 134 (RSS), 253 to 254 (NA), glycine 298, 313 to 317 (KPIPT), and arginine 339.

The protein belongs to the chorismate synthase family. As to quaternary structure, homotetramer. The cofactor is FMNH2.

The enzyme catalyses 5-O-(1-carboxyvinyl)-3-phosphoshikimate = chorismate + phosphate. Its pathway is metabolic intermediate biosynthesis; chorismate biosynthesis; chorismate from D-erythrose 4-phosphate and phosphoenolpyruvate: step 7/7. In terms of biological role, catalyzes the anti-1,4-elimination of the C-3 phosphate and the C-6 proR hydrogen from 5-enolpyruvylshikimate-3-phosphate (EPSP) to yield chorismate, which is the branch point compound that serves as the starting substrate for the three terminal pathways of aromatic amino acid biosynthesis. This reaction introduces a second double bond into the aromatic ring system. The protein is Chorismate synthase 1 of Bacillus cereus (strain ATCC 10987 / NRS 248).